Here is a 352-residue protein sequence, read N- to C-terminus: Holliday junction branch migration complex subunit RuvB (352 aa).

Residues 13–201 are large ATPase domain (RuvB-L); that stretch reads LPLRKKELRL…FGISQKIEFY (189 aa). Residues R41, G82, K85, T86, T87, 148–150, R191, Y201, and R238 contribute to the ATP site; that span reads EDF. T86 lines the Mg(2+) pocket. A small ATPAse domain (RuvB-S) region spans residues 202–273; that stretch reads NYDELKQILL…LIKKALNSYQ (72 aa). The tract at residues 276-352 is head domain (RuvB-H); the sequence is DKGLDSLDRH…KYIDSKNDDF (77 aa). DNA-binding residues include R330 and R335.

Belongs to the RuvB family. In terms of assembly, homohexamer. Forms an RuvA(8)-RuvB(12)-Holliday junction (HJ) complex. HJ DNA is sandwiched between 2 RuvA tetramers; dsDNA enters through RuvA and exits via RuvB. An RuvB hexamer assembles on each DNA strand where it exits the tetramer. Each RuvB hexamer is contacted by two RuvA subunits (via domain III) on 2 adjacent RuvB subunits; this complex drives branch migration. In the full resolvosome a probable DNA-RuvA(4)-RuvB(12)-RuvC(2) complex forms which resolves the HJ.

It is found in the cytoplasm. The enzyme catalyses ATP + H2O = ADP + phosphate + H(+). The RuvA-RuvB-RuvC complex processes Holliday junction (HJ) DNA during genetic recombination and DNA repair, while the RuvA-RuvB complex plays an important role in the rescue of blocked DNA replication forks via replication fork reversal (RFR). RuvA specifically binds to HJ cruciform DNA, conferring on it an open structure. The RuvB hexamer acts as an ATP-dependent pump, pulling dsDNA into and through the RuvAB complex. RuvB forms 2 homohexamers on either side of HJ DNA bound by 1 or 2 RuvA tetramers; 4 subunits per hexamer contact DNA at a time. Coordinated motions by a converter formed by DNA-disengaged RuvB subunits stimulates ATP hydrolysis and nucleotide exchange. Immobilization of the converter enables RuvB to convert the ATP-contained energy into a lever motion, pulling 2 nucleotides of DNA out of the RuvA tetramer per ATP hydrolyzed, thus driving DNA branch migration. The RuvB motors rotate together with the DNA substrate, which together with the progressing nucleotide cycle form the mechanistic basis for DNA recombination by continuous HJ branch migration. Branch migration allows RuvC to scan DNA until it finds its consensus sequence, where it cleaves and resolves cruciform DNA. The chain is Holliday junction branch migration complex subunit RuvB from Prochlorococcus marinus (strain MIT 9301).